The chain runs to 78 residues: U-scoloptoxin(04)-Er1d (78 aa).

The N-terminal stretch at 1–24 (MTRHLIFAAMLLVCLFVCWNAVGA) is a signal peptide. Positions 25 to 28 (RDAR) are excised as a propeptide.

This sequence belongs to the scoloptoxin-04 family. In terms of processing, contains 2 disulfide bonds. Expressed by the venom gland.

The protein localises to the secreted. The chain is U-scoloptoxin(04)-Er1d from Ethmostigmus rubripes (Giant centipede).